We begin with the raw amino-acid sequence, 475 residues long: Tryptophan--tRNA ligase, cytoplasmic (475 aa).

The WHEP-TRS domain maps to 12 to 68 (SPQELFSSIAAQGELVKSLKARKAPKEEIDSAVKMLLSLKTSYKEAMGEDYKADCPP). The tract at residues 61–87 (DYKADCPPGNSTPDSHGDPEAVDDKED) is disordered. Residue lysine 158 is modified to N6-succinyllysine. The short motif at 168 to 177 (PSSEAMHVGH) is the 'HIGH' region element. The 'KMSKS' region signature appears at 353–357 (KMSAS). A Phosphoserine modification is found at serine 355.

It belongs to the class-I aminoacyl-tRNA synthetase family. Homodimer. Interacts with oxidized form of GAPDH. Post-translationally, proteolytic cleavage generates 2 forms; T1-TrpRS and T2-TrpRS.

Its subcellular location is the cytoplasm. It carries out the reaction tRNA(Trp) + L-tryptophan + ATP = L-tryptophyl-tRNA(Trp) + AMP + diphosphate + H(+). In terms of biological role, catalyzes the attachment of tryptophan to tRNA(Trp) in a two-step reaction: tryptophan is first activated by ATP to form Trp-AMP and then transferred to the acceptor end of the tRNA(Trp). Could also possess an angiostatic activity. The sequence is that of Tryptophan--tRNA ligase, cytoplasmic (WARS1) from Oryctolagus cuniculus (Rabbit).